The chain runs to 162 residues: MAETVADTRRLITKPQNLNDAYGPPSNFLEIDVSNPQTVGVGRGRFTTYEIRVKTNLPIFKLKESTVRRRYSDFEWLRSELERESKVVVPPLPGKAFLRHVPFRGDDGIFDDNFIEERKQGLEQFINKVAGHPLAQNERCLHMFLQDEIIDKSYTPSKIRHA.

Ala-2 carries the post-translational modification N-acetylalanine. One can recognise a PX domain in the interval 27–151; it reads NFLEIDVSNP…HMFLQDEIID (125 aa). Arg-43 is modified (omega-N-methylarginine). A 1,2-diacyl-sn-glycero-3-phospho-(1D-myo-inositol-3-phosphate) is bound by residues Arg-70, Ser-72, Lys-95, and Arg-118. Ser-72 carries the phosphoserine modification. A Glycyl lysine isopeptide (Lys-Gly) (interchain with G-Cter in SUMO2) cross-link involves residue Lys-95. The interval 147–162 is binds predominantly to PtdIns(P5) and weaker to PtdIns(P3) abd PtdIns(P4); involved in neurite outgrowth regulation; that stretch reads DEIIDKSYTPSKIRHA.

It belongs to the sorting nexin family. Interacts with VPS26A, VPS29. Interacts with VPS35; the interaction with VPS35 is direct. The association with the retromer CSC subcomplex subunits is proposed to represent a functional distinct retromer variant described as SNX3-retromer complex. Interacts with USP10 and SCNN1A. Interacts with TRFC. Interacts with SNX8; 2 molecules of SNX8 seems to associate with one molecule of SNX3. Interacts with PTPRU. Interacts with MON2 and DOP1B. Ubiquitinated, leading to its proteasomal degradation. Deubiquitinated by USP10. In terms of tissue distribution, highly expressed in developing red cells and hematopoietic tissues.

It is found in the early endosome. Its subcellular location is the cytoplasmic vesicle. The protein localises to the phagosome. Its function is as follows. Phosphoinositide-binding protein required for multivesicular body formation. Specifically binds phosphatidylinositol 3-phosphate (PtdIns(P3)). Can also bind phosphatidylinositol 4-phosphate (PtdIns(P4)), phosphatidylinositol 5-phosphate (PtdIns(P5)) and phosphatidylinositol 3,5-biphosphate (PtdIns(3,5)P2). Plays a role in protein transport between cellular compartments. Together with RAB7A facilitates endosome membrane association of the retromer cargo-selective subcomplex (CSC). May act in part as component of the SNX3-retromer complex which mediates the retrograde endosome-to-TGN transport of WLS distinct from the SNX-BAR retromer pathway. Promotes stability and cell surface expression of epithelial sodium channel (ENAC) subunits SCNN1A and SCNN1G. Not involved in EGFR degradation. Involved in the regulation of phagocytosis in dendritic cells possibly by regulating EEA1 recruitment to the nascent phagosomes. Involved in iron homeostasis through regulation of endocytic recycling of the transferrin receptor Tfrc presuambly by delivering the transferrin:transferrin receptor complex to recycling endosomes; the function may involve the CSC retromer subcomplex. Involved in regulation of neurite outgrowth in primary neurons. In Mus musculus (Mouse), this protein is Sorting nexin-3 (Snx3).